The sequence spans 312 residues: Malate dehydrogenase (312 aa).

NAD(+) contacts are provided by residues 12 to 17 (GAGFTG) and D36. Residues R87 and R93 each contribute to the substrate site. NAD(+) contacts are provided by residues N100 and 123–125 (LTN). N125 is a substrate binding site. Phosphoserine is present on S149. R156 is a binding site for substrate. H180 functions as the Proton acceptor in the catalytic mechanism.

It belongs to the LDH/MDH superfamily. MDH type 3 family.

It carries out the reaction (S)-malate + NAD(+) = oxaloacetate + NADH + H(+). Catalyzes the reversible oxidation of malate to oxaloacetate. In Bacillus licheniformis (strain ATCC 14580 / DSM 13 / JCM 2505 / CCUG 7422 / NBRC 12200 / NCIMB 9375 / NCTC 10341 / NRRL NRS-1264 / Gibson 46), this protein is Malate dehydrogenase.